The sequence spans 512 residues: Bifunctional purine biosynthesis protein PurH (512 aa).

An MGS-like domain is found at 1–144; it reads MKRALVSVSD…KNYHDVTIVV (144 aa).

Belongs to the PurH family.

It catalyses the reaction (6R)-10-formyltetrahydrofolate + 5-amino-1-(5-phospho-beta-D-ribosyl)imidazole-4-carboxamide = 5-formamido-1-(5-phospho-D-ribosyl)imidazole-4-carboxamide + (6S)-5,6,7,8-tetrahydrofolate. The enzyme catalyses IMP + H2O = 5-formamido-1-(5-phospho-D-ribosyl)imidazole-4-carboxamide. It participates in purine metabolism; IMP biosynthesis via de novo pathway; 5-formamido-1-(5-phospho-D-ribosyl)imidazole-4-carboxamide from 5-amino-1-(5-phospho-D-ribosyl)imidazole-4-carboxamide (10-formyl THF route): step 1/1. Its pathway is purine metabolism; IMP biosynthesis via de novo pathway; IMP from 5-formamido-1-(5-phospho-D-ribosyl)imidazole-4-carboxamide: step 1/1. The chain is Bifunctional purine biosynthesis protein PurH from Limosilactobacillus reuteri (strain DSM 20016) (Lactobacillus reuteri).